A 294-amino-acid chain; its full sequence is Flavin-dependent thymidylate synthase (294 aa).

The 224-residue stretch at 27–250 (GFIRVIDYMG…PFTYEAFEEY (224 aa)) folds into the ThyX domain. Residues threonine 73, 96 to 98 (RHR), and glutamate 104 each bind FAD. DUMP-binding positions include 93 to 96 (QWIR), 104 to 108 (EYSAR), and arginine 189. The short motif at 96–106 (RHRTASVNEYS) is the ThyX motif element. FAD contacts are provided by residues 205–207 (NLH) and histidine 211. Arginine 216 lines the dUMP pocket. Arginine 216 serves as the catalytic Involved in ionization of N3 of dUMP, leading to its activation.

Belongs to the thymidylate synthase ThyX family. As to quaternary structure, homotetramer. FAD serves as cofactor.

The enzyme catalyses dUMP + (6R)-5,10-methylene-5,6,7,8-tetrahydrofolate + NADPH + H(+) = dTMP + (6S)-5,6,7,8-tetrahydrofolate + NADP(+). It participates in pyrimidine metabolism; dTTP biosynthesis. Catalyzes the reductive methylation of 2'-deoxyuridine-5'-monophosphate (dUMP) to 2'-deoxythymidine-5'-monophosphate (dTMP) while utilizing 5,10-methylenetetrahydrofolate (mTHF) as the methyl donor, and NADPH and FADH(2) as the reductant. The chain is Flavin-dependent thymidylate synthase from Rickettsia bellii (strain RML369-C).